Consider the following 70-residue polypeptide: Large ribosomal subunit protein bL31 (70 aa).

Cys16, Cys18, Cys37, and Cys40 together coordinate Zn(2+). The disordered stretch occupies residues 48–70; sequence QRQASSGGRVDKFNKRFGALGSK.

Belongs to the bacterial ribosomal protein bL31 family. Type A subfamily. As to quaternary structure, part of the 50S ribosomal subunit. Zn(2+) serves as cofactor.

Binds the 23S rRNA. This chain is Large ribosomal subunit protein bL31, found in Photobacterium profundum (strain SS9).